The chain runs to 123 residues: Large ribosomal subunit protein uL24 (123 aa).

This sequence belongs to the universal ribosomal protein uL24 family. Part of the 50S ribosomal subunit.

Functionally, one of two assembly initiator proteins, it binds directly to the 5'-end of the 23S rRNA, where it nucleates assembly of the 50S subunit. Located at the polypeptide exit tunnel on the outside of the subunit. This Methanocella arvoryzae (strain DSM 22066 / NBRC 105507 / MRE50) protein is Large ribosomal subunit protein uL24.